Reading from the N-terminus, the 527-residue chain is Pentatricopeptide repeat-containing protein At4g25270, chloroplastic (527 aa).

A chloroplast-targeting transit peptide spans Met-1–Leu-47. The interval Ser-12–Phe-44 is disordered. Residues Met-21 to Arg-35 show a composition bias toward basic residues. PPR repeat units follow at residues Asn-126–Arg-156, Ser-159–Pro-193, Asp-194–Tyr-228, Asp-229–Lys-259, Asp-260–Pro-294, Asp-295–Trp-326, Glu-327–Ser-361, Ser-367–Pro-389, Asp-390–Pro-425, and Lys-426–Glu-457. The tract at residues Val-462–Thr-527 is type E motif; degenerate.

Belongs to the PPR family. PCMP-E subfamily.

The protein resides in the plastid. It is found in the chloroplast. The polypeptide is Pentatricopeptide repeat-containing protein At4g25270, chloroplastic (PCMP-E53) (Arabidopsis thaliana (Mouse-ear cress)).